The primary structure comprises 645 residues: Synaptotagmin-16 (645 aa).

Disordered regions lie at residues A102–S121, E144–E192, and Q206–V344. Residues E167–S177 show a composition bias toward polar residues. Over residues G179–E192 the composition is skewed to acidic residues. Residues H287 to G303 show a composition bias toward polar residues. Positions K350–L469 constitute a C2 1 domain. The interval S478–H503 is disordered. The span at S485 to S502 shows a compositional bias: low complexity. A C2 2 domain is found at G505–H640.

Belongs to the synaptotagmin family. As to quaternary structure, homodimer. Can also form heterodimers. Expressed in brain.

In terms of biological role, may be involved in the trafficking and exocytosis of secretory vesicles in non-neuronal tissues. Is Ca(2+)-independent. The polypeptide is Synaptotagmin-16 (SYT16) (Homo sapiens (Human)).